We begin with the raw amino-acid sequence, 159 residues long: Ribosomal RNA large subunit methyltransferase H (159 aa).

Residues Leu76, Gly108, and 127–132 (FGLLTL) each bind S-adenosyl-L-methionine.

This sequence belongs to the RNA methyltransferase RlmH family. Homodimer.

The protein resides in the cytoplasm. It carries out the reaction pseudouridine(1915) in 23S rRNA + S-adenosyl-L-methionine = N(3)-methylpseudouridine(1915) in 23S rRNA + S-adenosyl-L-homocysteine + H(+). Functionally, specifically methylates the pseudouridine at position 1915 (m3Psi1915) in 23S rRNA. This chain is Ribosomal RNA large subunit methyltransferase H, found in Leuconostoc citreum (strain KM20).